A 267-amino-acid chain; its full sequence is Ras-related protein Rab-36 (267 aa).

Positions 68, 69, 70, 71, 72, 83, 86, and 89 each coordinate GTP. Position 71 (Thr-71) interacts with Mg(2+). Positions 76–94 match the Switch 1 motif; it reads RFCKNVFDRDYKATIGVDF. Thr-89 and Asp-112 together coordinate Mg(2+). The Switch 2 signature appears at 113-132; sequence TAGQEKFKCIASAYYRGAQV. Residues Gly-115, Lys-172, Asp-174, Ser-203, Ala-204, and Lys-205 each contribute to the GTP site. Positions 243 to 267 are disordered; sequence GDLIQMEGSPPETQESKRPSSLGCC. S-geranylgeranyl cysteine attachment occurs at residues Cys-266 and Cys-267.

The protein belongs to the small GTPase superfamily. Rab family. It depends on Mg(2+) as a cofactor. As to expression, ubiquitously present in all tissues examined.

It is found in the golgi apparatus membrane. It carries out the reaction GTP + H2O = GDP + phosphate + H(+). Regulated by guanine nucleotide exchange factors (GEFs) which promote the exchange of bound GDP for free GTP. Regulated by GTPase activating proteins (GAPs) which increase the GTP hydrolysis activity. Inhibited by GDP dissociation inhibitors (GDIs). In terms of biological role, the small GTPases Rab are key regulators of intracellular membrane trafficking, from the formation of transport vesicles to their fusion with membranes. Rabs cycle between an inactive GDP-bound form and an active GTP-bound form that is able to recruit to membranes different sets of downstream effectors directly responsible for vesicle formation, movement, tethering and fusion. In Homo sapiens (Human), this protein is Ras-related protein Rab-36.